A 288-amino-acid polypeptide reads, in one-letter code: Elongation factor Ts (288 aa).

The involved in Mg(2+) ion dislocation from EF-Tu stretch occupies residues 82 to 85 (TDFV).

Belongs to the EF-Ts family.

The protein localises to the cytoplasm. Functionally, associates with the EF-Tu.GDP complex and induces the exchange of GDP to GTP. It remains bound to the aminoacyl-tRNA.EF-Tu.GTP complex up to the GTP hydrolysis stage on the ribosome. This chain is Elongation factor Ts, found in Chlorobium chlorochromatii (strain CaD3).